The chain runs to 396 residues: Gap junction gamma-1 protein (396 aa).

Topologically, residues 1–22 (MSWSFLTRLLEEIHNHSTFVGK) are cytoplasmic. Residues 23–45 (IWLTVLIVFRIVLTAVGGESIYY) traverse the membrane as a helical segment. Over 46–75 (DEQSKFVCNTEQPGCENVCYDAFAPLSHVR) the chain is Extracellular. Residues 76 to 95 (FWVFQIILVATPSVMYLGYA) form a helical membrane-spanning segment. Residues 96–175 (IHKIAKMEHG…RRIREDGLMK (80 aa)) lie on the Cytoplasmic side of the membrane. Residues 146 to 165 (LESEKENKDQNQSKPKHDGR) form a disordered region. Residues 147-156 (ESEKENKDQN) are compositionally biased toward basic and acidic residues. Residues 176–198 (IYVLQLLARTVFEVGFLVGQYFL) form a helical membrane-spanning segment. Topologically, residues 199–228 (YGFQVHPFYVCSRLPCPHKIDCFISRPTEK) are extracellular. Residues 229–248 (TIFLLIMYGVTGLCLLLNIW) traverse the membrane as a helical segment. Residues 249–396 (EMLHLGFGTI…SGDGKTSVWI (148 aa)) are Cytoplasmic-facing. A disordered region spans residues 356–396 (YNHQNNPHGSREKKAKVGSKAGSNKSSASSKSGDGKTSVWI). Residues 373–396 (GSKAGSNKSSASSKSGDGKTSVWI) show a composition bias toward low complexity.

It belongs to the connexin family. Gamma-type subfamily. As to quaternary structure, a connexon is composed of a hexamer of connexins. Interacts with CNST.

It is found in the cell membrane. The protein localises to the cell junction. It localises to the gap junction. One gap junction consists of a cluster of closely packed pairs of transmembrane channels, the connexons, through which materials of low MW diffuse from one cell to a neighboring cell. This is Gap junction gamma-1 protein (GJC1) from Bos taurus (Bovine).